A 160-amino-acid polypeptide reads, in one-letter code: Prostaglandin E synthase 3 (160 aa).

Positions 1–90 (MQPASAKWYD…ESGQSWPRLT (90 aa)) constitute a CS domain. Lys33 bears the N6-acetyllysine mark. Lys35 participates in a covalent cross-link: Glycyl lysine isopeptide (Lys-Gly) (interchain with G-Cter in SUMO2). Ser44 is modified (phosphoserine). Lys65 is covalently cross-linked (Glycyl lysine isopeptide (Lys-Gly) (interchain with G-Cter in SUMO2)). Phosphoserine is present on residues Ser85, Ser100, Ser113, Ser118, Ser148, and Ser151. The segment at 124–160 (SEMMNNMGGDEDVDLPEVDGADDDSQDSDDEKMPDLE) is disordered. A compositionally biased stretch (acidic residues) spans 132 to 153 (GDEDVDLPEVDGADDDSQDSDD). The short motif at 157–160 (PDLE) is the PXLE motif element.

This sequence belongs to the p23/wos2 family. Probably forms a complex composed of chaperones HSP90 and HSP70, co-chaperones STIP1/HOP, CDC37, PPP5C, PTGES3/p23, TSC1 and client protein TSC2. Binds to the progesterone receptor. Interacts with TERT; the interaction, together with HSP90AA1, is required for correct assembly and stabilization of the telomerase holoenzyme complex. Interacts (via PXLE motif) with EGLN1/PHD2, recruiting EGLN1/PHD2 to the HSP90 pathway to facilitate HIF alpha proteins hydroxylation. Interacts with HSP90AA1, FLCN, FNIP1 and FNIP2. Proteolytically cleaved by caspase-7 (CASP7) in response to apoptosis, leading to its inactivation. As to expression, detected in testis and ovary, at lower levels in endometrium, myometrium, kidney and lung, and only faintly in spleen, heart and muscle (at protein level). Expressed at high levels in glandular and luminal epithelial cells of the endometrium, but also detected in stromal cells (at protein level).

The protein resides in the cytoplasm. The catalysed reaction is prostaglandin H2 = prostaglandin E2. The protein operates within lipid metabolism; prostaglandin biosynthesis. Cytosolic prostaglandin synthase that catalyzes the oxidoreduction of prostaglandin endoperoxide H2 (PGH2) to prostaglandin E2 (PGE2). Molecular chaperone that localizes to genomic response elements in a hormone-dependent manner and disrupts receptor-mediated transcriptional activation, by promoting disassembly of transcriptional regulatory complexes. Facilitates HIF alpha proteins hydroxylation via interaction with EGLN1/PHD2, leading to recruit EGLN1/PHD2 to the HSP90 pathway. The protein is Prostaglandin E synthase 3 (PTGES3) of Bos taurus (Bovine).